Reading from the N-terminus, the 277-residue chain is Thymidylate synthase (277 aa).

Residue R21 participates in dUMP binding. (6R)-5,10-methylene-5,6,7,8-tetrahydrofolate is bound at residue H51. Residue 126–127 (RR) participates in dUMP binding. C159 acts as the Nucleophile in catalysis. DUMP contacts are provided by residues 179–182 (RSAD), N190, and 220–222 (HLY). D182 contacts (6R)-5,10-methylene-5,6,7,8-tetrahydrofolate. S276 contacts (6R)-5,10-methylene-5,6,7,8-tetrahydrofolate.

It belongs to the thymidylate synthase family. Bacterial-type ThyA subfamily. In terms of assembly, homodimer.

The protein localises to the cytoplasm. It catalyses the reaction dUMP + (6R)-5,10-methylene-5,6,7,8-tetrahydrofolate = 7,8-dihydrofolate + dTMP. It functions in the pathway pyrimidine metabolism; dTTP biosynthesis. Functionally, catalyzes the reductive methylation of 2'-deoxyuridine-5'-monophosphate (dUMP) to 2'-deoxythymidine-5'-monophosphate (dTMP) while utilizing 5,10-methylenetetrahydrofolate (mTHF) as the methyl donor and reductant in the reaction, yielding dihydrofolate (DHF) as a by-product. This enzymatic reaction provides an intracellular de novo source of dTMP, an essential precursor for DNA biosynthesis. This chain is Thymidylate synthase, found in Hydrogenovibrio crunogenus (strain DSM 25203 / XCL-2) (Thiomicrospira crunogena).